Reading from the N-terminus, the 286-residue chain is Polyamine aminopropyltransferase (286 aa).

Residues 3–240 enclose the PABS domain; that stretch reads DLWYSESHAD…GHWLFGFASK (238 aa). S-methyl-5'-thioadenosine is bound at residue Q32. Spermidine-binding residues include H63 and D87. Residues E107 and 139-140 contribute to the S-methyl-5'-thioadenosine site; that span reads DG. D158 serves as the catalytic Proton acceptor. 158–161 contacts spermidine; it reads DSTD. Residue P165 participates in S-methyl-5'-thioadenosine binding.

This sequence belongs to the spermidine/spermine synthase family. Homodimer or homotetramer.

The protein localises to the cytoplasm. The catalysed reaction is S-adenosyl 3-(methylsulfanyl)propylamine + putrescine = S-methyl-5'-thioadenosine + spermidine + H(+). Its pathway is amine and polyamine biosynthesis; spermidine biosynthesis; spermidine from putrescine: step 1/1. Its function is as follows. Catalyzes the irreversible transfer of a propylamine group from the amino donor S-adenosylmethioninamine (decarboxy-AdoMet) to putrescine (1,4-diaminobutane) to yield spermidine. The sequence is that of Polyamine aminopropyltransferase from Clostridium acetobutylicum (strain ATCC 824 / DSM 792 / JCM 1419 / IAM 19013 / LMG 5710 / NBRC 13948 / NRRL B-527 / VKM B-1787 / 2291 / W).